A 174-amino-acid chain; its full sequence is Endoribonuclease YbeY (174 aa).

3 residues coordinate Zn(2+): His129, His133, and His139.

The protein belongs to the endoribonuclease YbeY family. Zn(2+) serves as cofactor.

It is found in the cytoplasm. Functionally, single strand-specific metallo-endoribonuclease involved in late-stage 70S ribosome quality control and in maturation of the 3' terminus of the 16S rRNA. In Lactobacillus acidophilus (strain ATCC 700396 / NCK56 / N2 / NCFM), this protein is Endoribonuclease YbeY.